The sequence spans 473 residues: Histone-lysine N-methyltransferase SET5 (473 aa).

Positions 107 to 381 (ANVHIIMTSK…SGEELTTTYV (275 aa)) constitute an SET domain.

The protein belongs to the class V-like SAM-binding methyltransferase superfamily. Histone-lysine methyltransferase family. SET5 subfamily.

The protein localises to the nucleus. Its subcellular location is the chromosome. It localises to the cytoplasm. The catalysed reaction is L-lysyl-[histone] + S-adenosyl-L-methionine = N(6)-methyl-L-lysyl-[histone] + S-adenosyl-L-homocysteine + H(+). Its function is as follows. Histone methyltransferase that monomethylates 'Lys-5', 'Lys-8' and 'Lys-12' of histone H4 (H4K5me1, H4K8me1 and H4K12me1, respectively), thereby controlling gene expression and remodeling chromatin structures. This chain is Histone-lysine N-methyltransferase SET5 (SET5), found in Candida albicans (strain SC5314 / ATCC MYA-2876) (Yeast).